The following is a 984-amino-acid chain: Serine/threonine-protein kinase N2 (984 aa).

Ser-21 carries the phosphoserine modification. One can recognise an REM-1 1 domain in the interval 33 to 109 (KLDFSDTMVQ…LQELNAHIVV (77 aa)). Lys-77 carries the N6-acetyllysine modification. A Phosphoserine modification is found at Ser-110. Positions 114 to 133 (DITDCPRTPDTPNNDPRCST) are disordered. A phosphothreonine mark is found at Thr-121 and Thr-124. 2 consecutive REM-1 domains span residues 121 to 203 (TPDT…TNEL) and 204 to 284 (AFDN…EVPK). Over residues 123–133 (DTPNNDPRCST) the composition is skewed to polar residues. Residues Ser-302, Ser-306, Ser-360, and Ser-362 each carry the phosphoserine modification. Residues 351 to 383 (ATSVALPGWSPSETRSSFMSRTSKSKSGSSRNL) are disordered. Positions 353-473 (SVALPGWSPS…LYLEPQGTLF (121 aa)) constitute a C2 domain. A compositionally biased stretch (low complexity) spans 364–381 (TRSSFMSRTSKSKSGSSR). Residues 382–463 (NLLKTDDLSN…FLDNQRHGMC (82 aa)) are necessary to rescue apical junction formation. Phosphoserine occurs at positions 535, 583, and 620. Residues 558–584 (ASDSTVTKLDFDLEPEPPPAPPRASSL) are disordered. Phosphothreonine is present on Thr-628. At Ser-631 the chain carries Phosphoserine. The region spanning 657–916 (FRCCAVLGRG…AEDVKKHPFF (260 aa)) is the Protein kinase domain. Residues 663-671 (LGRGHFGKV) and Lys-686 each bind ATP. The active-site Proton acceptor is Asp-782. Thr-816 carries the post-translational modification Phosphothreonine; by PDPK1. The tract at residues 917 to 977 (RLIDWSALMD…EEEQEMFRDF (61 aa)) is necessary for the catalytic activity. The region spanning 917–984 (RLIDWSALMD…RDFDYIADWC (68 aa)) is the AGC-kinase C-terminal domain. Phosphoserine is present on Ser-952. Phosphothreonine is present on Thr-958. The interval 978–984 (DYIADWC) is negatively regulates the responsiveness of the catalytic activity by cardiolipin and is required for optimal activation by the GTP-bound RhoA.

The protein belongs to the protein kinase superfamily. AGC Ser/Thr protein kinase family. PKC subfamily. As to quaternary structure, interacts (via the REM repeats) with RHOA (GTP-bound form preferentially) and interacts (via the REM repeats) with RAC1 (GTP-bound form preferentially); the interactions induce its autophosphorylation. Interacts with RHOC. Interacts with NCK1 and NCK2. Interacts with NCK1 (via SH3 domains). Interacts with CD44. Interacts (via C-terminal kinase domain) with PDPK1; the interaction stimulates PDPK1 kinase activity. Interacts with MAP3K2; the interaction activates PRK2 kinase activity in a MAP3K2-independent kinase activity. Interacts (via C-terminal domain) with AKT1; the interaction occurs with the C-terminal cleavage product of PRK2 in apoptotic cells. Interacts (via C-terminus) with PTPN13 (via PDZ 3 domain). Interacts with CDK10. (Microbial infection) Interacts with HCV NS5B (via N-terminal finger domain). Autophosphorylated. Phosphorylated during mitosis. Phosphorylated by CDK10. In terms of processing, activated by limited proteolysis with trypsin. Proteolytically cleaved by caspase-3 during the induction of apoptotic cell death. In terms of tissue distribution, ubiquitous. Expressed in numerous tumor cell lines, especially in bladder tumor cells.

It is found in the cytoplasm. It localises to the nucleus. The protein resides in the membrane. Its subcellular location is the cell projection. The protein localises to the lamellipodium. It is found in the cytoskeleton. It localises to the cleavage furrow. The protein resides in the midbody. Its subcellular location is the cell junction. The enzyme catalyses L-seryl-[protein] + ATP = O-phospho-L-seryl-[protein] + ADP + H(+). The catalysed reaction is L-threonyl-[protein] + ATP = O-phospho-L-threonyl-[protein] + ADP + H(+). Kinase activity is activated upon binding to GTP-bound Rhoa/Rac1 GTPases. Activated by caspase-3 (CASP3) cleavage during apoptosis. Activated by lipids, particularly cardiolipin and to a lesser extent by other acidic phospholipids and unsaturated fatty acids. Two specific sites, Thr-816 (activation loop of the kinase domain) and Thr-958 (turn motif), need to be phosphorylated for its full activation. Its function is as follows. PKC-related serine/threonine-protein kinase and Rho/Rac effector protein that participates in specific signal transduction responses in the cell. Plays a role in the regulation of cell cycle progression, actin cytoskeleton assembly, cell migration, cell adhesion, tumor cell invasion and transcription activation signaling processes. Phosphorylates CTTN in hyaluronan-induced astrocytes and hence decreases CTTN ability to associate with filamentous actin. Phosphorylates HDAC5, therefore lead to impair HDAC5 import. Direct RhoA target required for the regulation of the maturation of primordial junctions into apical junction formation in bronchial epithelial cells. Required for G2/M phases of the cell cycle progression and abscission during cytokinesis in a ECT2-dependent manner. Stimulates FYN kinase activity that is required for establishment of skin cell-cell adhesion during keratinocytes differentiation. Regulates epithelial bladder cells speed and direction of movement during cell migration and tumor cell invasion. Inhibits Akt pro-survival-induced kinase activity. Mediates Rho protein-induced transcriptional activation via the c-fos serum response factor (SRF). Involved in the negative regulation of ciliogenesis. In terms of biological role, (Microbial infection) Phosphorylates HCV NS5B leading to stimulation of HCV RNA replication. This chain is Serine/threonine-protein kinase N2 (PKN2), found in Homo sapiens (Human).